We begin with the raw amino-acid sequence, 139 residues long: Large ribosomal subunit protein uL16 (139 aa).

Basic residues predominate over residues 1–19 (MLIPRRVKYRKQHHPKRTG). The segment at 1 to 23 (MLIPRRVKYRKQHHPKRTGAAKG) is disordered.

It belongs to the universal ribosomal protein uL16 family. As to quaternary structure, part of the 50S ribosomal subunit.

Functionally, binds 23S rRNA and is also seen to make contacts with the A and possibly P site tRNAs. In Cutibacterium acnes (strain DSM 16379 / KPA171202) (Propionibacterium acnes), this protein is Large ribosomal subunit protein uL16.